Here is a 66-residue protein sequence, read N- to C-terminus: Large ribosomal subunit protein eL24 (66 aa).

Residues cysteine 6, cysteine 9, cysteine 32, and cysteine 36 each coordinate Zn(2+). The segment at 6-36 (CSFCGKTIEPGTGIMYVRKDGAILYFCSNKC) adopts a C4-type zinc-finger fold.

It belongs to the eukaryotic ribosomal protein eL24 family. Part of the 50S ribosomal subunit. Forms a cluster with proteins L3 and L14. The cofactor is Zn(2+).

Functionally, binds to the 23S rRNA. This Thermoplasma volcanium (strain ATCC 51530 / DSM 4299 / JCM 9571 / NBRC 15438 / GSS1) protein is Large ribosomal subunit protein eL24.